The primary structure comprises 219 residues: RNA-free ribonuclease P (219 aa).

The protein belongs to the HARP family.

The catalysed reaction is Endonucleolytic cleavage of RNA, removing 5'-extranucleotides from tRNA precursor.. Its function is as follows. RNA-free RNase P that catalyzes the removal of the 5'-leader sequence from pre-tRNA to produce the mature 5'-terminus. The chain is RNA-free ribonuclease P from Staphylothermus marinus (strain ATCC 43588 / DSM 3639 / JCM 9404 / F1).